Here is a 555-residue protein sequence, read N- to C-terminus: Formate--tetrahydrofolate ligase (555 aa).

Residue 65 to 72 (TPAGEGKS) participates in ATP binding.

The protein belongs to the formate--tetrahydrofolate ligase family.

The enzyme catalyses (6S)-5,6,7,8-tetrahydrofolate + formate + ATP = (6R)-10-formyltetrahydrofolate + ADP + phosphate. The protein operates within one-carbon metabolism; tetrahydrofolate interconversion. This Staphylococcus aureus (strain Mu3 / ATCC 700698) protein is Formate--tetrahydrofolate ligase.